A 442-amino-acid chain; its full sequence is tRNA-2-methylthio-N(6)-dimethylallyladenosine synthase (442 aa).

Positions 3 to 120 (KKLYIETHGC…LPEMIDAARI (118 aa)) constitute an MTTase N-terminal domain. 6 residues coordinate [4Fe-4S] cluster: cysteine 12, cysteine 49, cysteine 83, cysteine 157, cysteine 161, and cysteine 164. Residues 143 to 375 (RIDGPSAYVS…QHRLNQQGFE (233 aa)) enclose the Radical SAM core domain. The TRAM domain occupies 378 to 442 (RQMVGSVQRI…PHSLRGSLIQ (65 aa)).

It belongs to the methylthiotransferase family. MiaB subfamily. As to quaternary structure, monomer. [4Fe-4S] cluster serves as cofactor.

The protein resides in the cytoplasm. It carries out the reaction N(6)-dimethylallyladenosine(37) in tRNA + (sulfur carrier)-SH + AH2 + 2 S-adenosyl-L-methionine = 2-methylsulfanyl-N(6)-dimethylallyladenosine(37) in tRNA + (sulfur carrier)-H + 5'-deoxyadenosine + L-methionine + A + S-adenosyl-L-homocysteine + 2 H(+). Its function is as follows. Catalyzes the methylthiolation of N6-(dimethylallyl)adenosine (i(6)A), leading to the formation of 2-methylthio-N6-(dimethylallyl)adenosine (ms(2)i(6)A) at position 37 in tRNAs that read codons beginning with uridine. The polypeptide is tRNA-2-methylthio-N(6)-dimethylallyladenosine synthase (Pseudomonas fluorescens (strain Pf0-1)).